A 438-amino-acid polypeptide reads, in one-letter code: Enolase (438 aa).

Gln-163 is a binding site for (2R)-2-phosphoglycerate. Residue Glu-205 is the Proton donor of the active site. Residues Asp-243, Glu-292, and Asp-319 each coordinate Mg(2+). (2R)-2-phosphoglycerate contacts are provided by Lys-344, Arg-373, Ser-374, and Lys-395. Lys-344 acts as the Proton acceptor in catalysis.

This sequence belongs to the enolase family. Requires Mg(2+) as cofactor.

The protein localises to the cytoplasm. It localises to the secreted. It is found in the cell surface. It carries out the reaction (2R)-2-phosphoglycerate = phosphoenolpyruvate + H2O. Its pathway is carbohydrate degradation; glycolysis; pyruvate from D-glyceraldehyde 3-phosphate: step 4/5. Its function is as follows. Catalyzes the reversible conversion of 2-phosphoglycerate (2-PG) into phosphoenolpyruvate (PEP). It is essential for the degradation of carbohydrates via glycolysis. The polypeptide is Enolase (Streptococcus agalactiae).